Here is a 66-residue protein sequence, read N- to C-terminus: DNA gyrase inhibitor YacG (66 aa).

C9, C12, C28, and C32 together coordinate Zn(2+). A disordered region spans residues 45-66 (HKIAGSQESEDELYSGDLEPRH).

Belongs to the DNA gyrase inhibitor YacG family. As to quaternary structure, interacts with GyrB. Zn(2+) serves as cofactor.

Functionally, inhibits all the catalytic activities of DNA gyrase by preventing its interaction with DNA. Acts by binding directly to the C-terminal domain of GyrB, which probably disrupts DNA binding by the gyrase. The sequence is that of DNA gyrase inhibitor YacG from Pseudomonas putida (strain W619).